A 326-amino-acid polypeptide reads, in one-letter code: Adenosine receptor A1 (326 aa).

Over 1-10 (MPHSVSAFQA) the chain is Extracellular. Residues 11-33 (AYIGIEVLIALVSVPGNVLVIWA) form a helical membrane-spanning segment. At 34 to 46 (VKVNQALRDATFC) the chain is on the cytoplasmic side. Residues 47-69 (FIASLAVADVAVGALVIPLAILI) form a helical membrane-spanning segment. At 70 to 80 (NIGPQTYFHTC) the chain is on the extracellular side. A disulfide bridge connects residues Cys80 and Cys169. The chain crosses the membrane as a helical span at residues 81–102 (LMVACPVLILTQSSILALLAIA). The Cytoplasmic segment spans residues 103–123 (VDRYLRVKIPLRYKTVVTPRR). A helical transmembrane segment spans residues 124-146 (AAVAIAGCWILSLVVGLTPMFGW). Residues 147–176 (NNLSKIEMAWAANGSVGEPVIKCEFEKVIS) lie on the Extracellular side of the membrane. Residue Asn159 is glycosylated (N-linked (GlcNAc...) asparagine). A helical membrane pass occupies residues 177–201 (MEYMVYFNFFVWVLPPLLLMVLIYL). The Cytoplasmic segment spans residues 202–235 (EVFYLIRKQLSKKVSASSGDPQKYYGKELKIAKS). The chain crosses the membrane as a helical span at residues 236–259 (LALILFLFALSWLPLHILNCITLF). The Extracellular segment spans residues 260 to 267 (CPTCHKPT). A helical transmembrane segment spans residues 268-292 (ILTYIAIFLTHGNSAMNPIVYAFRI). Residues 293–326 (QKFRVTFLKIWNDHFRCQPEPPIDEDLPEEKVDD) lie on the Cytoplasmic side of the membrane. Cys309 carries S-palmitoyl cysteine lipidation.

This sequence belongs to the G-protein coupled receptor 1 family.

The protein resides in the cell membrane. Functionally, receptor for adenosine. The activity of this receptor is mediated by G proteins which inhibit adenylyl cyclase. This is Adenosine receptor A1 (ADORA1) from Cavia porcellus (Guinea pig).